The sequence spans 750 residues: Photosystem I P700 chlorophyll a apoprotein A1 (750 aa).

8 consecutive transmembrane segments (helical) span residues 70 to 93 (VFSA…FHGA), 156 to 179 (LYCT…FHYH), 195 to 219 (LNHH…HVSL), 291 to 309 (IAHH…GHMY), 346 to 369 (WHAQ…HHMY), 385 to 411 (LSLF…IFMV), 433 to 455 (AIIS…LYIH), and 531 to 549 (FLVH…LILL). Residues Cys-573 and Cys-582 each coordinate [4Fe-4S] cluster. 2 helical membrane-spanning segments follow: residues 589–610 (HVFL…HFSW) and 664–686 (LSAY…MFLF). His-675 lines the chlorophyll a' pocket. Positions 683 and 691 each coordinate chlorophyll a. Trp-692 is a phylloquinone binding site. Residues 724–744 (AVGVTHYLLGGIATTWAFFLA) form a helical membrane-spanning segment.

Belongs to the PsaA/PsaB family. As to quaternary structure, the PsaA/B heterodimer binds the P700 chlorophyll special pair and subsequent electron acceptors. PSI consists of a core antenna complex that captures photons, and an electron transfer chain that converts photonic excitation into a charge separation. The eukaryotic PSI reaction center is composed of at least 11 subunits. It depends on P700 is a chlorophyll a/chlorophyll a' dimer, A0 is one or more chlorophyll a, A1 is one or both phylloquinones and FX is a shared 4Fe-4S iron-sulfur center. as a cofactor.

It localises to the plastid. It is found in the chloroplast thylakoid membrane. The enzyme catalyses reduced [plastocyanin] + hnu + oxidized [2Fe-2S]-[ferredoxin] = oxidized [plastocyanin] + reduced [2Fe-2S]-[ferredoxin]. In terms of biological role, psaA and PsaB bind P700, the primary electron donor of photosystem I (PSI), as well as the electron acceptors A0, A1 and FX. PSI is a plastocyanin-ferredoxin oxidoreductase, converting photonic excitation into a charge separation, which transfers an electron from the donor P700 chlorophyll pair to the spectroscopically characterized acceptors A0, A1, FX, FA and FB in turn. Oxidized P700 is reduced on the lumenal side of the thylakoid membrane by plastocyanin. The polypeptide is Photosystem I P700 chlorophyll a apoprotein A1 (Lepidium virginicum (Virginia pepperweed)).